A 195-amino-acid polypeptide reads, in one-letter code: Imidazoleglycerol-phosphate dehydratase (195 aa).

Belongs to the imidazoleglycerol-phosphate dehydratase family.

Its subcellular location is the cytoplasm. It carries out the reaction D-erythro-1-(imidazol-4-yl)glycerol 3-phosphate = 3-(imidazol-4-yl)-2-oxopropyl phosphate + H2O. It participates in amino-acid biosynthesis; L-histidine biosynthesis; L-histidine from 5-phospho-alpha-D-ribose 1-diphosphate: step 6/9. The chain is Imidazoleglycerol-phosphate dehydratase from Pelotomaculum thermopropionicum (strain DSM 13744 / JCM 10971 / SI).